The sequence spans 257 residues: MRHVPRKRFGQNFLRDPGVIQEIVAAVGPAPSDRLVEIGPGEGVLTRELLQSGACLEAIELDRDLVAALKRRFAGVGRLRIHEGDAMKFDLRTIATGERLRVVGNLPYNISTPLLFHLFDQIDVIEDMHFMLQKEVVDRLCAGAGDDHYGRLSVMAALYCQAQHLFDVGPECFHPQPKVVSAVVRLVPHAVPPDAGMVKQVSAVVVAAFGQRRKTLRNALKGLLDETAMVRAGIDPGARAEELSLADYVGLSRQLNP.

S-adenosyl-L-methionine-binding residues include Asn12, Leu14, Gly39, Glu60, Asp85, and Asn105.

It belongs to the class I-like SAM-binding methyltransferase superfamily. rRNA adenine N(6)-methyltransferase family. RsmA subfamily.

It is found in the cytoplasm. It carries out the reaction adenosine(1518)/adenosine(1519) in 16S rRNA + 4 S-adenosyl-L-methionine = N(6)-dimethyladenosine(1518)/N(6)-dimethyladenosine(1519) in 16S rRNA + 4 S-adenosyl-L-homocysteine + 4 H(+). Functionally, specifically dimethylates two adjacent adenosines (A1518 and A1519) in the loop of a conserved hairpin near the 3'-end of 16S rRNA in the 30S particle. May play a critical role in biogenesis of 30S subunits. In Methylococcus capsulatus (strain ATCC 33009 / NCIMB 11132 / Bath), this protein is Ribosomal RNA small subunit methyltransferase A.